A 374-amino-acid chain; its full sequence is MDPLGPAKPQWLWRRCLAGLLFQLLVAVCFFSYLRVSRDDATGSPRPGLMAVEPVTGAPNGSRCQDSMATPAHPTLLILLWTWPFNTPVALPRCSEMVPGAADCNITADSSVYPQADAVIVHHWDIMYNPSANLPPPTRPQGQRWIWFSMESPSNCRHLEALDGYFNLTMSYRSDSDIFTPYGWLEPWSGQPAHPPLNLSAKTELVAWAVSNWKPDSARVRYYQSLQAHLKVDVYGRSHKPLPKGTMMETLSRYKFYLAFENSLHPDYITEKLWRNALEAWAVPVVLGPSRSNYERFLPPDAFIHVDDFQSPKDLARYLQELDKDHARYLSYFHWRETLRPRSFSWALAFCKACWKLQQESRYQTVRSIAAWFT.

The Cytoplasmic portion of the chain corresponds to 1–15 (MDPLGPAKPQWLWRR). The helical; Signal-anchor for type II membrane protein transmembrane segment at 16–34 (CLAGLLFQLLVAVCFFSYL) threads the bilayer. Topologically, residues 35 to 374 (RVSRDDATGS…TVRSIAAWFT (340 aa)) are lumenal. Asparagine 60, asparagine 105, asparagine 167, and asparagine 198 each carry an N-linked (GlcNAc...) asparagine glycan.

It belongs to the glycosyltransferase 10 family. As to expression, liver, colon and testis and trace amounts in T-cells and brain.

The protein localises to the golgi apparatus. The protein resides in the golgi stack membrane. The catalysed reaction is a beta-D-galactosyl-(1-&gt;3)-N-acetyl-beta-D-glucosaminyl derivative + GDP-beta-L-fucose = a beta-D-galactosyl-(1-&gt;3)-[alpha-L-fucosyl-(1-&gt;4)]-N-acetyl-beta-D-glucosaminyl derivative + GDP + H(+). It carries out the reaction an N-acetyl-alpha-neuraminyl-(2-&gt;3)-beta-D-galactosyl-(1-&gt;4)-N-acetyl-beta-D-glucosaminyl derivative + GDP-beta-L-fucose = an alpha-Neu5Ac-(2-&gt;3)-beta-D-Gal-(1-&gt;4)-[alpha-L-Fuc-(1-&gt;3)]-beta-D-GlcNAc derivative + GDP + H(+). It catalyses the reaction an alpha-Neu5Ac-(2-&gt;3)-beta-D-Gal-(1-&gt;4)-beta-D-GlcNAc-(1-&gt;3)-beta-D-Gal-(1-&gt;4)-[alpha-L-Fuc-(1-&gt;3)]-beta-D-GlcNAc derivative + GDP-beta-L-fucose = an alpha-Neu5Ac-(2-&gt;3)-beta-D-Gal-(1-&gt;4)-[alpha-L-Fuc-(1-&gt;3)]-beta-D-GlcNAc-(1-&gt;3)-beta-D-Gal-(1-&gt;4)-[alpha-L-Fuc-(1-&gt;3)]-beta-D-GlcNAc derivative + GDP + H(+). The enzyme catalyses a beta-D-galactosyl-(1-&gt;4)-N-acetyl-beta-D-glucosaminyl derivative + GDP-beta-L-fucose = a beta-D-galactosyl-(1-&gt;4)-[alpha-L-fucosyl-(1-&gt;3)]-N-acetyl-beta-D-glucosaminyl derivative + GDP + H(+). The catalysed reaction is a neolactoside nLc4Cer + GDP-beta-L-fucose = a neolactoside III(3)-alpha-Fuc-nLc4Cer + GDP + H(+). It carries out the reaction a neolactoside nLc6Cer + GDP-beta-L-fucose = beta-D-galactosyl-(1-&gt;4)-N-acetyl-beta-D-glucosaminyl-(1-&gt;3)-beta-D-galactosyl-(1-&gt;4)-[alpha-L-fucosyl-(1-&gt;3)]-N-acetyl-beta-D-glucosaminyl-(1-&gt;3)-beta-D-galactosyl-(1-&gt;4)-beta-D-glucosyl-(1&lt;-&gt;1')-ceramide + GDP + H(+). It catalyses the reaction a neolactoside nLc6Cer(d18:1(4E)) + GDP-beta-L-fucose = a neolactoside III(3)-alpha-Fuc-nLc6Cer(d18:1(4E)) + GDP + H(+). The enzyme catalyses a neolactoside nLc4Cer(d18:1(4E)) + GDP-beta-L-fucose = a neolactoside III(3)-alpha-Fuc-nLc4Cer(d18:1(4E)) + GDP + H(+). The catalysed reaction is a neolactoside VI(3)-alpha-NeuNAc-nLc6Cer + GDP-beta-L-fucose = a neolactoside VI(3)-alpha-NeuAc,III(3)-alphaFuc-nLc6Cer + GDP + H(+). It carries out the reaction beta-D-galactosyl-(1-&gt;4)-N-acetyl-D-glucosamine + GDP-beta-L-fucose = beta-D-galactosyl-(1-&gt;4)-[alpha-L-fucosyl-(1-&gt;3)]-N-acetyl-D-glucosamine + GDP + H(+). It catalyses the reaction N-acetyl-alpha-neuraminosyl-(2-&gt;3)-beta-D-galactosyl-(1-&gt;4)-N-acetyl-beta-D-glucosamine + GDP-beta-L-fucose = N-acetyl-alpha-neuraminosyl-(2-&gt;3)-beta-D-galactosyl-(1-&gt;4)-[alpha-L-fucosyl-(1-&gt;3)]-N-acetyl-beta-D-glucosamine + GDP + H(+). The enzyme catalyses alpha-L-Fuc-(1-&gt;2)-beta-D-Gal-(1-&gt;4)-D-GlcNAc + GDP-beta-L-fucose = alpha-L-Fuc-(1-&gt;2)-beta-D-Gal-(1-&gt;4)-[alpha-L-Fuc-(1-&gt;3)]-D-GlcNAc + GDP + H(+). The catalysed reaction is an alpha-Neu5Ac-(2-&gt;3)-beta-D-Gal-(1-&gt;3)-D-GlcNAc derivative + GDP-beta-L-fucose = an alpha-Neu5Ac-(2-&gt;3)-beta-D-Gal-(1-&gt;3)-[alpha-L-Fuc-(1-&gt;4)]-beta-D-GlcNAc derivative + GDP + H(+). It functions in the pathway protein modification; protein glycosylation. Its function is as follows. Catalyzes preferentially the transfer of L-fucose, from a guanosine diphosphate-beta-L-fucose, to the N-acetyl-beta-D-glucosamine (GlcNAc) of an N-acetyllactosamine unit (type 2 chain) of an oligosaccharide, or a glycoprotein- and a glycolipid-linked N-acetyllactosamine unit via an alpha (1,3) linkage and participates in the surface expression of VIM-2, Lewis X/SSEA-1 and sialyl Lewis X antigens. Preferentially transfers fucose to the GlcNAc of an internal N-acetyllactosamine unit of a poly-N-acetyllactosamine chain acceptor substrate. Also catalyzes to a lesser extend the transfer of L-fucose to the GlcNAc of a type 1 (beta-D-galactosyl-(1-&gt;3)-N-acetyl-beta-D-glucosaminyl) or H-type 1 (alpha-L-Fuc-(1-&gt;2)-beta-D-Gal-(1-&gt;3)-D-GlcNAc) chain oligosaccharide via an alpha (1,4) linkage. Preferentially catalyzes sialylated type 2 oligosaccharide acceptors over neutral type 2 or H type 2 (alpha-L-Fuc-(1-&gt;2)-beta-D-Gal-(1-&gt;4)-D-GlcNAc) oligosaccharide acceptors. Lactose-based structures are also acceptor substrates. This Homo sapiens (Human) protein is 4-galactosyl-N-acetylglucosaminide 3-alpha-L-fucosyltransferase FUT5.